We begin with the raw amino-acid sequence, 210 residues long: 3-demethoxyubiquinol 3-hydroxylase (210 aa).

The Fe cation site is built by E59, E89, H92, E141, E173, and H176.

It belongs to the COQ7 family. Fe cation is required as a cofactor.

It localises to the cell membrane. The enzyme catalyses a 5-methoxy-2-methyl-3-(all-trans-polyprenyl)benzene-1,4-diol + AH2 + O2 = a 3-demethylubiquinol + A + H2O. The protein operates within cofactor biosynthesis; ubiquinone biosynthesis. In terms of biological role, catalyzes the hydroxylation of 2-nonaprenyl-3-methyl-6-methoxy-1,4-benzoquinol during ubiquinone biosynthesis. The chain is 3-demethoxyubiquinol 3-hydroxylase from Albidiferax ferrireducens (strain ATCC BAA-621 / DSM 15236 / T118) (Rhodoferax ferrireducens).